The primary structure comprises 192 residues: Sarcoplasmic calcium-binding protein 1 (192 aa).

Alanine 1 bears the N-acetylalanine mark. EF-hand domains lie at 4–39 (WDNRVKYVVRYMYDIDNNGFLDKNDFECLALRNTLI), 56–91 (IMSNLWNEIAELADFNKDGEVTIDEFKKAVQNVCVG), 100–135 (AFKVFIANQFKTVDVNGDGLVGVDEYRLDCISRSAF), and 136–171 (ANIKEIDDAYNKLATDADKKAGGISLARYQELYAQF). 13 residues coordinate Ca(2+): aspartate 17, aspartate 19, asparagine 21, aspartate 28, aspartate 69, asparagine 71, aspartate 73, glutamate 75, glutamate 80, aspartate 113, asparagine 115, aspartate 117, and glutamate 124.

As to quaternary structure, SCPs from crayfish, lobster, and shrimp are polymorphic dimers.

Its function is as follows. Like parvalbumins, SCPs seem to be more abundant in fast contracting muscles, but no functional relationship can be established from this distribution. The chain is Sarcoplasmic calcium-binding protein 1 from Astacus leptodactylus (Turkish narrow-clawed crayfish).